A 277-amino-acid polypeptide reads, in one-letter code: Undecaprenyl-diphosphatase 1 (277 aa).

Transmembrane regions (helical) follow at residues 1-21 (MSLLEAVILGLVQGITEFLPI), 39-58 (AGFSFEILLHLASVLAVILY), 85-105 (FWFAIYLVVATGITGVAGILF), 113-133 (FKAPIFIALALAVTGLFLIII), 147-167 (MTIWDSIIVGLGQCLALIPGL), 191-211 (SFLLSIPVILGSSVLAIDDLI), 226-246 (ASFVVTFIASWLGIVFFLNLV), and 251-271 (LVYFAVYCFIVAILVFIFQDA).

It belongs to the UppP family.

The protein localises to the cell membrane. It catalyses the reaction di-trans,octa-cis-undecaprenyl diphosphate + H2O = di-trans,octa-cis-undecaprenyl phosphate + phosphate + H(+). Catalyzes the dephosphorylation of undecaprenyl diphosphate (UPP). Confers resistance to bacitracin. This is Undecaprenyl-diphosphatase 1 from Shouchella clausii (strain KSM-K16) (Alkalihalobacillus clausii).